The following is a 695-amino-acid chain: MSNLAEVAPALDEDKIVTFPGSPFQLYQPFPPAGDQPEAIRQLVEGIEDGLSFQTLLGVTGSGKTYTMANVIARMGRPAIVFAPNKTLAAQLYSEFREFFPRNAVEYFVSYYDYYQPEAYVPQRDLFIEKDSSINEHIEQMRLSATKSLLERRDTIIVATVSAIYGIGNPNEYHQMILTLRTGDKISQRDVIARLIAMQYTRNETDFQRGTFRVRGDTIDIFPAEHAEMAVRLEMFDDEVESLQFFDPLTGRVRQKIPRFTVYPSSHYVTPRETVLRAIEDIKAELRDRLEFFHKENRLVEVQRLEQRTRFDLEMLSELGFCKGIENYSRHLSGAKPGEPPPTLVDYLPSDALMFLDESHVLIGQLNGMYNGDRARKTTLVEYGFRLPSALDNRPLKFEEFERKMRQVMFVSATPAQFEKEHAGQVVEQVVRPTGLVDPIIIVRPATTQVDDLLSEINLRVEAGERVLVTTLTKRMAEQLTEFLSENGVKVRYLHSDIDTVERVEIIRDLRLGTFDVLVGINLLREGLDIPEVSLVAILDADKEGFLRAERSLIQTIGRAARNVNGTAILYADRITDSMRKAIDETERRRAKQMAFNEANGITPRGVIKRIKDIIDGVYDAGEVKAELLAAQERARYEDMSEKQVSKEIKRLEKLMMDHAKNLEFEKAAQVRDQLAKLKAQLFGASGEEAPMPPV.

Residues 45–434 (EGIEDGLSFQ…QVVEQVVRPT (390 aa)) form the Helicase ATP-binding domain. 58-65 (GVTGSGKT) is an ATP binding site. A Beta-hairpin motif is present at residues 111 to 134 (YYDYYQPEAYVPQRDLFIEKDSSI). Residues 449–602 (QVDDLLSEIN…QMAFNEANGI (154 aa)) enclose the Helicase C-terminal domain. The UVR domain occupies 646-681 (SKEIKRLEKLMMDHAKNLEFEKAAQVRDQLAKLKAQ).

The protein belongs to the UvrB family. Forms a heterotetramer with UvrA during the search for lesions. Interacts with UvrC in an incision complex.

The protein resides in the cytoplasm. The UvrABC repair system catalyzes the recognition and processing of DNA lesions. A damage recognition complex composed of 2 UvrA and 2 UvrB subunits scans DNA for abnormalities. Upon binding of the UvrA(2)B(2) complex to a putative damaged site, the DNA wraps around one UvrB monomer. DNA wrap is dependent on ATP binding by UvrB and probably causes local melting of the DNA helix, facilitating insertion of UvrB beta-hairpin between the DNA strands. Then UvrB probes one DNA strand for the presence of a lesion. If a lesion is found the UvrA subunits dissociate and the UvrB-DNA preincision complex is formed. This complex is subsequently bound by UvrC and the second UvrB is released. If no lesion is found, the DNA wraps around the other UvrB subunit that will check the other stand for damage. This is UvrABC system protein B from Cupriavidus pinatubonensis (strain JMP 134 / LMG 1197) (Cupriavidus necator (strain JMP 134)).